We begin with the raw amino-acid sequence, 329 residues long: Isopenicillin N synthase (329 aa).

Isopenicillin N is bound by residues arginine 87, tyrosine 91, serine 183, and tyrosine 189. N-[(5S)-5-amino-5-carboxypentanoyl]-L-cysteinyl-D-valine is bound by residues arginine 87, tyrosine 91, serine 183, tyrosine 189, histidine 212, and aspartate 214. The region spanning 180–286 is the Fe2OG dioxygenase domain; that stretch reads SLSSVSLIRY…RLSLPFFLNG (107 aa). Histidine 212, aspartate 214, and histidine 268 together coordinate Fe(2+). Residue arginine 277 coordinates 2-oxoglutarate. Residue serine 279 coordinates isopenicillin N. An N-[(5S)-5-amino-5-carboxypentanoyl]-L-cysteinyl-D-valine-binding site is contributed by serine 279.

The protein belongs to the iron/ascorbate-dependent oxidoreductase family. The cofactor is Fe cation. It depends on L-ascorbate as a cofactor.

It catalyses the reaction N-[(5S)-5-amino-5-carboxypentanoyl]-L-cysteinyl-D-valine + O2 = isopenicillin N + 2 H2O. Its pathway is antibiotic biosynthesis; penicillin G biosynthesis; penicillin G from L-alpha-aminoadipate and L-cysteine and L-valine: step 2/3. Its function is as follows. Removes, in the presence of oxygen, 4 hydrogen atoms from delta-L-(alpha-aminoadipyl)-L-cysteinyl-D-valine (ACV) to form the azetidinone and thiazolidine rings of isopenicillin. This is Isopenicillin N synthase (pcbC) from Streptomyces clavuligerus.